A 145-amino-acid polypeptide reads, in one-letter code: LIM domain only protein 3 (145 aa).

LIM zinc-binding domains are found at residues 11–73 and 75–137; these read KGCA…LFGV and GNCA…GLMK.

This chain is LIM domain only protein 3, found in Danio rerio (Zebrafish).